Consider the following 476-residue polypeptide: Fatty acid hydroperoxide lyase, chloroplastic (476 aa).

A helical transmembrane segment spans residues 280 to 300; that stretch reads LLFILGFNAFGGFSIFLPTLL. Position 438 (Cys-438) interacts with heme.

The protein belongs to the cytochrome P450 family. Requires heme as cofactor. Highly expressed in developing flowers and in young leaves. Detected in stems and immature green fruits, but not in mature green and red fruits.

Its subcellular location is the plastid. The protein resides in the chloroplast outer membrane. Its activity is regulated as follows. Reversibly inhibited by nordihydroguaiaretic acid (NDGA) and irreversibly by salicylic acid. In terms of biological role, cytochrome P450 of the CYP74B subfamily involved in the biosynthesis of traumatin and C6 aldehydes. Metabolizes 13- but not 9-hydroperoxides of linoleic and linolenic acids. Can use 15S-hydroperoxy-11(Z),13(E),17(Z)-eicosatrienoic acid (15-HPET) and 13S-hydroperoxy-9(Z),11(E),15(Z)-octadecatrienoic acid (13-HPOT) as substrates, but only 5% activity with 13S-hydroperoxy-9(Z),11(E)-octadecadienoic acid (13-HPOD). Produces n-hexanal and 12-oxo-9(Z)-dodecanoic acid from 13-HPOD. In Solanum lycopersicum (Tomato), this protein is Fatty acid hydroperoxide lyase, chloroplastic.